We begin with the raw amino-acid sequence, 265 residues long: Deoxyribose-phosphate aldolase 2 (265 aa).

The active-site Proton donor/acceptor is D108. K173 (schiff-base intermediate with acetaldehyde) is an active-site residue. K207 functions as the Proton donor/acceptor in the catalytic mechanism.

Belongs to the DeoC/FbaB aldolase family. DeoC type 2 subfamily.

The protein localises to the cytoplasm. It catalyses the reaction 2-deoxy-D-ribose 5-phosphate = D-glyceraldehyde 3-phosphate + acetaldehyde. It functions in the pathway carbohydrate degradation; 2-deoxy-D-ribose 1-phosphate degradation; D-glyceraldehyde 3-phosphate and acetaldehyde from 2-deoxy-alpha-D-ribose 1-phosphate: step 2/2. Catalyzes a reversible aldol reaction between acetaldehyde and D-glyceraldehyde 3-phosphate to generate 2-deoxy-D-ribose 5-phosphate. This chain is Deoxyribose-phosphate aldolase 2 (deoC2), found in Yersinia pestis.